We begin with the raw amino-acid sequence, 372 residues long: Envelope phospholipase OPG057 (372 aa).

The YPPL signature appears at 153–156 (YPPL). 2 S-palmitoyl cysteine; by host lipidation sites follow: Cys-185 and Cys-186. Positions 307–334 (FTIQNNTKLLIVDDEYVHITSANFDGTH) constitute a PLD phosphodiesterase domain.

The protein belongs to the orthopoxvirus OPG057 family. Interacts with protein OPG190/B5. Post-translationally, palmitoylated. Attachment of the palmitate moiety is essential for correct intracellular targeting and protein function.

The protein resides in the virion membrane. It is found in the host Golgi apparatus. Its subcellular location is the host trans-Golgi network. The protein localises to the host endoplasmic reticulum membrane. It carries out the reaction a 1,2-diacyl-sn-glycero-3-phosphocholine + H2O = a 1,2-diacyl-sn-glycero-3-phosphate + choline + H(+). Its function is as follows. Major envelope protein that plays a role in the biogenesis of the viral double membrane and in egress of virus from the host cell. Produces the wrapped form of virus that is required for cell-to-cell spread. Acts as a lipase with broad specificity including phospholipase C, phospholipase A, and triacylglycerol lipase activities. The protein is Envelope phospholipase OPG057 (OPG057) of Vaccinia virus (strain Western Reserve) (VACV).